Reading from the N-terminus, the 268-residue chain is Thymidylate synthase (268 aa).

DUMP contacts are provided by residues R26 and 131–132 (RR). C151 acts as the Nucleophile in catalysis. DUMP-binding positions include 171–174 (RSAD), N182, and 212–214 (HIY). D174 provides a ligand contact to (6R)-5,10-methylene-5,6,7,8-tetrahydrofolate. A (6R)-5,10-methylene-5,6,7,8-tetrahydrofolate-binding site is contributed by S267.

This sequence belongs to the thymidylate synthase family. Bacterial-type ThyA subfamily. In terms of assembly, homodimer.

The protein localises to the cytoplasm. It carries out the reaction dUMP + (6R)-5,10-methylene-5,6,7,8-tetrahydrofolate = 7,8-dihydrofolate + dTMP. The protein operates within pyrimidine metabolism; dTTP biosynthesis. Its function is as follows. Catalyzes the reductive methylation of 2'-deoxyuridine-5'-monophosphate (dUMP) to 2'-deoxythymidine-5'-monophosphate (dTMP) while utilizing 5,10-methylenetetrahydrofolate (mTHF) as the methyl donor and reductant in the reaction, yielding dihydrofolate (DHF) as a by-product. This enzymatic reaction provides an intracellular de novo source of dTMP, an essential precursor for DNA biosynthesis. The sequence is that of Thymidylate synthase from Corynebacterium aurimucosum (strain ATCC 700975 / DSM 44827 / CIP 107346 / CN-1) (Corynebacterium nigricans).